Consider the following 61-residue polypeptide: Small ribosomal subunit protein uS14 (61 aa).

Cys24, Cys27, Cys40, and Cys43 together coordinate Zn(2+).

Belongs to the universal ribosomal protein uS14 family. Zinc-binding uS14 subfamily. Part of the 30S ribosomal subunit. Contacts proteins S3 and S10. Zn(2+) serves as cofactor.

Functionally, binds 16S rRNA, required for the assembly of 30S particles and may also be responsible for determining the conformation of the 16S rRNA at the A site. This chain is Small ribosomal subunit protein uS14, found in Dictyoglomus turgidum (strain DSM 6724 / Z-1310).